The following is a 609-amino-acid chain: Large ribosomal subunit assembly factor BipA (609 aa).

The tr-type G domain maps to 3–198 (QNIRNIAIIA…AIIKYAPAPN (196 aa)). GTP is bound by residues 15 to 20 (DHGKTT) and 128 to 131 (NKID).

It belongs to the TRAFAC class translation factor GTPase superfamily. Classic translation factor GTPase family. BipA subfamily. As to quaternary structure, monomer.

It localises to the cytoplasm. It carries out the reaction GTP + H2O = GDP + phosphate + H(+). A 50S ribosomal subunit assembly protein with GTPase activity, required for 50S subunit assembly at low temperatures, may also play a role in translation. Binds GTP and analogs. Binds the 70S ribosome between the 30S and 50S subunits, in a similar position as ribosome-bound EF-G; it contacts a number of ribosomal proteins, both rRNAs and the A-site tRNA. This chain is Large ribosomal subunit assembly factor BipA, found in Buchnera aphidicola subsp. Schizaphis graminum (strain Sg).